The primary structure comprises 709 residues: Dual specificity calcium/calmodulin-dependent 3',5'-cyclic nucleotide phosphodiesterase 1C (709 aa).

Met1 carries the post-translational modification N-acetylmethionine. A calmodulin-binding region spans residues 123–146 (EKPRFKSIVHAVQAGIFVERMYRR). Positions 151–528 (VGLSYPPAVI…ERWRAKVPKE (378 aa)) constitute a PDEase domain. His228 functions as the Proton donor in the catalytic mechanism. Residues His232, His268, Asp269, and Asp376 each coordinate Zn(2+). Asp269 is a binding site for Mg(2+). Disordered stretches follow at residues 453–495 (LIDE…APIN) and 523–650 (AKVP…TCRL). Residues 483-495 (VKTSGSEGSAPIN) are compositionally biased toward polar residues. Over residues 523–556 (AKVPKEEKAKKEAEEKARLAAEEQQKEMEAKSQA) the composition is skewed to basic and acidic residues. Polar residues predominate over residues 571-581 (ETKNQVNGTRA). 2 stretches are compositionally biased toward basic and acidic residues: residues 582–598 (NKSD…EKSS) and 606–633 (DFKD…DGTK).

The protein belongs to the cyclic nucleotide phosphodiesterase family. PDE1 subfamily. As to quaternary structure, homodimer. Requires Zn(2+) as cofactor. Mg(2+) serves as cofactor. In terms of tissue distribution, isoform PDE1C2 is present in the heart and brain and, at lower levels in the lung, liver, kidney and skeletal muscle. Isoform PDE1C1 is expressed in the heart and brain and, at lower levels in lung. Also expressed at low levels in uterus and testis.

It localises to the lysosome. It carries out the reaction a nucleoside 3',5'-cyclic phosphate + H2O = a nucleoside 5'-phosphate + H(+). The catalysed reaction is 3',5'-cyclic GMP + H2O = GMP + H(+). It catalyses the reaction 3',5'-cyclic AMP + H2O = AMP + H(+). Type I PDE are activated by the binding of calmodulin in the presence of Ca(2+). Its function is as follows. Calmodulin-dependent cyclic nucleotide phosphodiesterase with a dual specificity for the second messengers cAMP and cGMP, which are key regulators of many important physiological processes. Has a high affinity for both cAMP and cGMP. Modulates the amplitude and duration of the cAMP signal in sensory cilia in response to odorant stimulation, hence contributing to the generation of action potentials. Regulates smooth muscle cell proliferation. Regulates the stability of growth factor receptors, including PDGFRB. This Homo sapiens (Human) protein is Dual specificity calcium/calmodulin-dependent 3',5'-cyclic nucleotide phosphodiesterase 1C.